Consider the following 252-residue polypeptide: MNKLQNIRGVAFDLDGTLVDSAPGLAAAVDMALYALELPVAGEERVITWIGNGADVLMERALTWASQERATLRKTMGKPPVDEDIPAEEQVRILRKLFDKYYGEVAEEGTFLFPHVADTLGALHASGLSLGLVTNKPTPFVAPLLESLDIAKYFSVVIGGDDVQNKKPHPEPLLLVASRLGMTPEQMLFVGDSRNDIQAAKAAGCPSVGLTYGYNYGEVIALSEPDVIYDSFNDLLPALGLPHSDNQEIKND.

The active-site Nucleophile is the Asp-13. The Mg(2+) site is built by Asp-13, Asp-15, and Asp-192.

It belongs to the HAD-like hydrolase superfamily. CbbY/CbbZ/Gph/YieH family. Monomer. Mg(2+) is required as a cofactor. It depends on chloride as a cofactor.

The catalysed reaction is 2-phosphoglycolate + H2O = glycolate + phosphate. Its pathway is organic acid metabolism; glycolate biosynthesis; glycolate from 2-phosphoglycolate: step 1/1. Its function is as follows. Specifically catalyzes the dephosphorylation of 2-phosphoglycolate. Is involved in the dissimilation of the intracellular 2-phosphoglycolate formed during the DNA repair of 3'-phosphoglycolate ends, a major class of DNA lesions induced by oxidative stress. The chain is Phosphoglycolate phosphatase from Salmonella typhi.